A 788-amino-acid chain; its full sequence is Endonuclease MutS2 (788 aa).

ATP is bound at residue 334–341 (GPNTGGKT). The region spanning 713-788 (LDLRGKRYEE…GNGATVVKFQ (76 aa)) is the Smr domain.

This sequence belongs to the DNA mismatch repair MutS family. MutS2 subfamily. In terms of assembly, homodimer. Binds to stalled ribosomes, contacting rRNA.

Functionally, endonuclease that is involved in the suppression of homologous recombination and thus may have a key role in the control of bacterial genetic diversity. Acts as a ribosome collision sensor, splitting the ribosome into its 2 subunits. Detects stalled/collided 70S ribosomes which it binds and splits by an ATP-hydrolysis driven conformational change. Acts upstream of the ribosome quality control system (RQC), a ribosome-associated complex that mediates the extraction of incompletely synthesized nascent chains from stalled ribosomes and their subsequent degradation. Probably generates substrates for RQC. The chain is Endonuclease MutS2 from Enterococcus faecalis (strain ATCC 700802 / V583).